Reading from the N-terminus, the 275-residue chain is MRRSRSSAAAKLRGQKRSGASGASAAPAASAAAALAPSATRTRRSASQAGSKSQAVEKPPSEKPRLRRSSPRAQEEGPGEPPPPELALLPPPPPPPPTPATPTSSASNLDLGEQRERWETFQKRQKLTSEGAAKLLLDTFEYQGLVKHTGGCHCGAVRFEVWASADLHIFDCNCSICKKKQNRHFIVPASRFKLLKGAEHITTYTFNTHKAQHTFCKRCGVQSFYTPRSNPGGFGIAPHCLDEGTVRSMVTEEFNGSDWEKAMKEHKTIKNMSKE.

Composition is skewed to low complexity over residues Met1–Ala10 and Arg17–Ser51. The interval Met1–Leu109 is disordered. Ser18 and Ser21 each carry phosphoserine. Arg43 bears the Omega-N-methylarginine mark. The span at Gly79–Ala100 shows a compositional bias: pro residues. A phosphothreonine mark is found at Thr98, Thr101, and Thr103. A CENP-V/GFA domain is found at His148–Glu260. Cys152, Cys154, Cys172, Cys174, Cys177, Cys216, and Cys219 together coordinate Zn(2+). Residue Ser257 is modified to Phosphoserine.

Belongs to the Gfa family. Zn(2+) serves as cofactor.

It is found in the chromosome. The protein localises to the centromere. The protein resides in the kinetochore. Its subcellular location is the nucleus. It localises to the cytoplasm. It is found in the cytoskeleton. The protein localises to the spindle. In terms of biological role, required for distribution of pericentromeric heterochromatin in interphase nuclei and for centromere formation and organization, chromosome alignment and cytokinesis. The sequence is that of Centromere protein V (CENPV) from Homo sapiens (Human).